The chain runs to 66 residues: Beta-toxin Cb1 (66 aa).

One can recognise an LCN-type CS-alpha/beta domain in the interval 1–66 (KEGYIVNHST…VWPLPKKTCN (66 aa)). Disulfide bonds link Cys-12-Cys-65, Cys-16-Cys-41, Cys-25-Cys-46, and Cys-29-Cys-48.

It belongs to the long (4 C-C) scorpion toxin superfamily. Sodium channel inhibitor family. Beta subfamily. Expressed by the venom gland.

Its subcellular location is the secreted. Inhibited by human antibodies scFvs 10FG2 and LR. Beta toxins bind voltage-independently at site-4 of sodium channels (Nav) and reduces peak current and shifts the voltage of activation toward more negative potentials thereby affecting sodium channel activation and promoting spontaneous and repetitive firing. Has an inhibitory effect on voltage-gated sodium channel hNav1.6/SCN8A, affecting both the activation and inactivation processes. This toxin is active against mammals and lethal to mice. The chain is Beta-toxin Cb1 from Centruroides baergi (Scorpion).